The chain runs to 88 residues: Small ribosomal subunit protein uS15c (88 aa).

This sequence belongs to the universal ribosomal protein uS15 family. In terms of assembly, part of the 30S ribosomal subunit.

The protein localises to the plastid. It localises to the chloroplast. In Arabis hirsuta (Hairy rock-cress), this protein is Small ribosomal subunit protein uS15c (rps15).